A 480-amino-acid chain; its full sequence is Aspartyl/glutamyl-tRNA(Asn/Gln) amidotransferase subunit B (480 aa).

It belongs to the GatB/GatE family. GatB subfamily. In terms of assembly, heterotrimer of A, B and C subunits.

It carries out the reaction L-glutamyl-tRNA(Gln) + L-glutamine + ATP + H2O = L-glutaminyl-tRNA(Gln) + L-glutamate + ADP + phosphate + H(+). It catalyses the reaction L-aspartyl-tRNA(Asn) + L-glutamine + ATP + H2O = L-asparaginyl-tRNA(Asn) + L-glutamate + ADP + phosphate + 2 H(+). Allows the formation of correctly charged Asn-tRNA(Asn) or Gln-tRNA(Gln) through the transamidation of misacylated Asp-tRNA(Asn) or Glu-tRNA(Gln) in organisms which lack either or both of asparaginyl-tRNA or glutaminyl-tRNA synthetases. The reaction takes place in the presence of glutamine and ATP through an activated phospho-Asp-tRNA(Asn) or phospho-Glu-tRNA(Gln). This chain is Aspartyl/glutamyl-tRNA(Asn/Gln) amidotransferase subunit B, found in Caldicellulosiruptor saccharolyticus (strain ATCC 43494 / DSM 8903 / Tp8T 6331).